The following is a 368-amino-acid chain: Probable leucine aminopeptidase ARB_03492 (368 aa).

An N-terminal signal peptide occupies residues 1–18; the sequence is MKVSAIAAVAALAAVAVA. Residue N92 is glycosylated (N-linked (GlcNAc...) asparagine). Zn(2+) contacts are provided by H172 and D191. 2 N-linked (GlcNAc...) asparagine glycosylation sites follow: N192 and N216. The Zn(2+) site is built by E230 and D257. A disulfide bond links C301 and C305. Zn(2+) is bound at residue H334.

It belongs to the peptidase M28 family. M28E subfamily. As to quaternary structure, monomer. Zn(2+) is required as a cofactor.

It is found in the secreted. Functionally, probable extracellular aminopeptidase which contributes to pathogenicity. The polypeptide is Probable leucine aminopeptidase ARB_03492 (Arthroderma benhamiae (strain ATCC MYA-4681 / CBS 112371) (Trichophyton mentagrophytes)).